Reading from the N-terminus, the 426-residue chain is Serine hydroxymethyltransferase (426 aa).

(6S)-5,6,7,8-tetrahydrofolate-binding positions include leucine 113 and 117 to 119 (GHL). Lysine 222 is subject to N6-(pyridoxal phosphate)lysine. Residue 363–365 (SAF) coordinates (6S)-5,6,7,8-tetrahydrofolate.

This sequence belongs to the SHMT family. As to quaternary structure, homodimer. It depends on pyridoxal 5'-phosphate as a cofactor.

The protein localises to the cytoplasm. It catalyses the reaction (6R)-5,10-methylene-5,6,7,8-tetrahydrofolate + glycine + H2O = (6S)-5,6,7,8-tetrahydrofolate + L-serine. The protein operates within one-carbon metabolism; tetrahydrofolate interconversion. Its pathway is amino-acid biosynthesis; glycine biosynthesis; glycine from L-serine: step 1/1. Functionally, catalyzes the reversible interconversion of serine and glycine with tetrahydrofolate (THF) serving as the one-carbon carrier. This reaction serves as the major source of one-carbon groups required for the biosynthesis of purines, thymidylate, methionine, and other important biomolecules. Also exhibits THF-independent aldolase activity toward beta-hydroxyamino acids, producing glycine and aldehydes, via a retro-aldol mechanism. This chain is Serine hydroxymethyltransferase, found in Porphyromonas gingivalis (strain ATCC 33277 / DSM 20709 / CIP 103683 / JCM 12257 / NCTC 11834 / 2561).